Consider the following 346-residue polypeptide: Dihydroorotate dehydrogenase (quinone) (346 aa).

FMN-binding positions include 61–65 (AGLDK) and Thr-85. Lys-65 serves as a coordination point for substrate. 110 to 114 (NRMGF) is a substrate binding site. Positions 138 and 171 each coordinate FMN. Asn-171 is a substrate binding site. Residue Ser-174 is the Nucleophile of the active site. Residue Asn-176 participates in substrate binding. Residues Lys-216 and Thr-244 each contribute to the FMN site. Residue 245–246 (NT) coordinates substrate. FMN-binding positions include Gly-267, Gly-296, and 317–318 (YS).

It belongs to the dihydroorotate dehydrogenase family. Type 2 subfamily. In terms of assembly, monomer. FMN is required as a cofactor.

Its subcellular location is the cell membrane. The enzyme catalyses (S)-dihydroorotate + a quinone = orotate + a quinol. Its pathway is pyrimidine metabolism; UMP biosynthesis via de novo pathway; orotate from (S)-dihydroorotate (quinone route): step 1/1. Its function is as follows. Catalyzes the conversion of dihydroorotate to orotate with quinone as electron acceptor. The sequence is that of Dihydroorotate dehydrogenase (quinone) from Marinomonas sp. (strain MWYL1).